Consider the following 177-residue polypeptide: Large ribosomal subunit protein uL6 (177 aa).

The protein belongs to the universal ribosomal protein uL6 family. Part of the 50S ribosomal subunit.

This protein binds to the 23S rRNA, and is important in its secondary structure. It is located near the subunit interface in the base of the L7/L12 stalk, and near the tRNA binding site of the peptidyltransferase center. The polypeptide is Large ribosomal subunit protein uL6 (Bordetella pertussis (strain Tohama I / ATCC BAA-589 / NCTC 13251)).